The following is a 627-amino-acid chain: MTRIQDDLFATVNAEWLENAEIPADKPRISAFDELVLKNEKNLAKDLADLSQNLPTDNPELLEAIKFYNKAGDWQTREKADFSAVKNELAKVETLNTFEDFKNNLTQLVFHSQAPLPFSFSVEPDMKDAIHYSLGFSGPGLILPDTTYYNDEHPRKKELLDFWAKNTSEILKTFDVENAEEIAKSALKFDALLVPSANTSEEWAKYAELYHPISTDSFVSKVKNLDLKSLIKDLVKTEPDKVIVYEDRFYESFDSLINEENWSLIKAWMLTKIARGATSFFNEDLRILGGAYGRFLSNVQEARSQEKHQLDLTESYFSQVIGLFYGKKYFGEAAKADVKRMVTAMIKVYQARLSKNEWLSQETAEKAIEKLDAITPFIGFPDKLPEIYSRLKTTSGSLYEDALKFDEILTARTFEKFSEDVDKTSWHMPAHMVNAYYSPDSNTIVFPAAILQAPFYSLEQSSSQNYGGIGTVIAHEISHAFDNNGAQFDKEGNLNKWWLDEDYEAFEEKQKEMIALFDGVETEAGPANGKLIVSENIADQGGITAALTAAKDEKDVDLKAFFSQWAKIWRMKASKEFQQMLLSMDVHAPAKLRANIPPTNLEEFYETFDVKETDKMYRAPENRLKIW.

One can recognise a Peptidase M13 domain in the interval 1–627; that stretch reads MTRIQDDLFA…RAPENRLKIW (627 aa). Histidine 475 contacts Zn(2+). Residue glutamate 476 is part of the active site. 2 residues coordinate Zn(2+): histidine 479 and glutamate 535. The active-site Proton donor is the aspartate 539.

Belongs to the peptidase M13 family. In terms of assembly, monomer. It depends on Zn(2+) as a cofactor.

Functionally, endopeptidase with broad substrate specificity for several oligopeptides. The protein is Neutral endopeptidase (pepO) of Lactococcus lactis subsp. lactis (strain IL1403) (Streptococcus lactis).